The following is a 467-amino-acid chain: ATP synthase subunit beta (467 aa).

150–157 (GGAGVGKT) is a binding site for ATP.

This sequence belongs to the ATPase alpha/beta chains family. In terms of assembly, F-type ATPases have 2 components, CF(1) - the catalytic core - and CF(0) - the membrane proton channel. CF(1) has five subunits: alpha(3), beta(3), gamma(1), delta(1), epsilon(1). CF(0) has three main subunits: a(1), b(2) and c(9-12). The alpha and beta chains form an alternating ring which encloses part of the gamma chain. CF(1) is attached to CF(0) by a central stalk formed by the gamma and epsilon chains, while a peripheral stalk is formed by the delta and b chains.

The protein localises to the cell inner membrane. The catalysed reaction is ATP + H2O + 4 H(+)(in) = ADP + phosphate + 5 H(+)(out). Functionally, produces ATP from ADP in the presence of a proton gradient across the membrane. The catalytic sites are hosted primarily by the beta subunits. This is ATP synthase subunit beta from Aliivibrio fischeri (strain MJ11) (Vibrio fischeri).